Consider the following 275-residue polypeptide: Apoptosis inhibitor 1 (275 aa).

2 BIR repeats span residues 24-91 (LIER…CVYA) and 126-193 (PSAR…CYFV). C163, C166, H183, and C190 together coordinate Zn(2+). An RING-type zinc finger spans residues 227–263 (CKVCLERQRDAVLLPCRHFCVCMQCYFALDGKCPTCR).

Acts by blocking cellular apoptosis rather than by preventing viral stimulation of apoptosis. The chain is Apoptosis inhibitor 1 (IAP1) from Orgyia pseudotsugata (Douglas-fir tussock moth).